Reading from the N-terminus, the 431-residue chain is O-methyltransferase xanE (431 aa).

Asp283 contributes to the S-adenosyl-L-methionine binding site. The active-site Proton acceptor is His330.

The protein belongs to the class I-like SAM-binding methyltransferase superfamily. Cation-independent O-methyltransferase family.

The protein operates within secondary metabolite biosynthesis. O-methyltransferase; part of the gene cluster that mediates the biosynthesis of the isocyanide xanthocillin and its derivatives. The first step of the pathway consists in the conversion of tyrosine into a vinyl-isonitrile intermediate by the isocyanide synthase xanB. Subsequent oxidative dimerization of this intermediate to form xanthocillin may involve the cytochrome P450 monooxygenase xanG, whose expression is coregulated with that of XanB. Xanthocillin can be further modified by the isonitrile hydratase-like protein xanA which introduces N-formyl groups and the methyltransferase xanE which introduces methyl groups, leading to the production of several derivatives including fumiformamide. Finally, fumiformamide can be subject to both oxidative and reductive cyclization to yield melanocins E and F, respectively. The protein is O-methyltransferase xanE of Aspergillus fumigatus (strain ATCC MYA-4609 / CBS 101355 / FGSC A1100 / Af293) (Neosartorya fumigata).